We begin with the raw amino-acid sequence, 194 residues long: Peptidyl-tRNA hydrolase (194 aa).

Residue tyrosine 17 coordinates tRNA. Histidine 22 (proton acceptor) is an active-site residue. TRNA contacts are provided by tyrosine 68, asparagine 70, and asparagine 116.

The protein belongs to the PTH family. In terms of assembly, monomer.

It is found in the cytoplasm. The catalysed reaction is an N-acyl-L-alpha-aminoacyl-tRNA + H2O = an N-acyl-L-amino acid + a tRNA + H(+). Functionally, hydrolyzes ribosome-free peptidyl-tRNAs (with 1 or more amino acids incorporated), which drop off the ribosome during protein synthesis, or as a result of ribosome stalling. In terms of biological role, catalyzes the release of premature peptidyl moieties from peptidyl-tRNA molecules trapped in stalled 50S ribosomal subunits, and thus maintains levels of free tRNAs and 50S ribosomes. This Pseudomonas savastanoi pv. phaseolicola (strain 1448A / Race 6) (Pseudomonas syringae pv. phaseolicola (strain 1448A / Race 6)) protein is Peptidyl-tRNA hydrolase.